The sequence spans 288 residues: MTSRLPISQPEHSPSWHAELHLGFARAGERTVLRENRHRGPLRVQKALYPEGEAVCQTIVLHPPSGIAGGDHLAISAEVGEGSHAQLTTPGAGKWYRSGGAEASQRVAFTVGEGATLEWLPQETIVFDGARARMETQVDLAADSRYIGWDILCLGRVAAGERFEKGRFDLFLQVNRDQRPIWIERGGFDGSDPMLISPAGWAGATVCGTLLCAFPEWPMQASALLEACRKIVPADGAQHGLSALPGVLIARYLGNSSEAARLWFAELWTILRPACCGRPAVIPRIWNT.

It belongs to the UreD family. UreD, UreF and UreG form a complex that acts as a GTP-hydrolysis-dependent molecular chaperone, activating the urease apoprotein by helping to assemble the nickel containing metallocenter of UreC. The UreE protein probably delivers the nickel.

The protein localises to the cytoplasm. Its function is as follows. Required for maturation of urease via the functional incorporation of the urease nickel metallocenter. This chain is Urease accessory protein UreD, found in Dechloromonas aromatica (strain RCB).